Reading from the N-terminus, the 420-residue chain is tRNA(Ile)-lysidine synthase (420 aa).

28 to 33 (SGGLDS) serves as a coordination point for ATP.

The protein belongs to the tRNA(Ile)-lysidine synthase family.

Its subcellular location is the cytoplasm. It catalyses the reaction cytidine(34) in tRNA(Ile2) + L-lysine + ATP = lysidine(34) in tRNA(Ile2) + AMP + diphosphate + H(+). In terms of biological role, ligates lysine onto the cytidine present at position 34 of the AUA codon-specific tRNA(Ile) that contains the anticodon CAU, in an ATP-dependent manner. Cytidine is converted to lysidine, thus changing the amino acid specificity of the tRNA from methionine to isoleucine. This chain is tRNA(Ile)-lysidine synthase, found in Hydrogenovibrio crunogenus (strain DSM 25203 / XCL-2) (Thiomicrospira crunogena).